A 360-amino-acid chain; its full sequence is Membrane-bound lytic murein transglycosylase C (360 aa).

Positions Met-1–Ser-16 are cleaved as a signal peptide. The N-palmitoyl cysteine moiety is linked to residue Cys-17. Cys-17 carries the S-diacylglycerol cysteine lipid modification.

The protein belongs to the transglycosylase Slt family.

The protein localises to the cell outer membrane. It carries out the reaction Exolytic cleavage of the (1-&gt;4)-beta-glycosidic linkage between N-acetylmuramic acid (MurNAc) and N-acetylglucosamine (GlcNAc) residues in peptidoglycan, from either the reducing or the non-reducing ends of the peptidoglycan chains, with concomitant formation of a 1,6-anhydrobond in the MurNAc residue.. Its function is as follows. Murein-degrading enzyme. May play a role in recycling of muropeptides during cell elongation and/or cell division. The protein is Membrane-bound lytic murein transglycosylase C of Salmonella paratyphi A (strain ATCC 9150 / SARB42).